Consider the following 535-residue polypeptide: Peptide chain release factor 3 (535 aa).

A tr-type G domain is found at 8–278; it reads ARRRTFAIIS…VDQAPAPGPR (271 aa). Residues 17–24, 85–89, and 139–142 each bind GTP; these read SHPDAGKT, DTPGH, and NKLD.

This sequence belongs to the TRAFAC class translation factor GTPase superfamily. Classic translation factor GTPase family. PrfC subfamily.

The protein resides in the cytoplasm. In terms of biological role, increases the formation of ribosomal termination complexes and stimulates activities of RF-1 and RF-2. It binds guanine nucleotides and has strong preference for UGA stop codons. It may interact directly with the ribosome. The stimulation of RF-1 and RF-2 is significantly reduced by GTP and GDP, but not by GMP. The protein is Peptide chain release factor 3 of Bordetella bronchiseptica (strain ATCC BAA-588 / NCTC 13252 / RB50) (Alcaligenes bronchisepticus).